The sequence spans 483 residues: tRNA-2-methylthio-N(6)-dimethylallyladenosine synthase (483 aa).

Residues 31 to 148 (KKLYIETQGC…LPQMLDQHQD (118 aa)) form the MTTase N-terminal domain. [4Fe-4S] cluster contacts are provided by Cys40, Cys77, Cys111, Cys192, Cys196, and Cys199. Positions 178-410 (RVEGFKAFVS…QHWIKQSSIR (233 aa)) constitute a Radical SAM core domain. The region spanning 413-477 (DAMQGTIQRV…LNLVYGELLN (65 aa)) is the TRAM domain.

Belongs to the methylthiotransferase family. MiaB subfamily. In terms of assembly, monomer. It depends on [4Fe-4S] cluster as a cofactor.

It is found in the cytoplasm. The catalysed reaction is N(6)-dimethylallyladenosine(37) in tRNA + (sulfur carrier)-SH + AH2 + 2 S-adenosyl-L-methionine = 2-methylsulfanyl-N(6)-dimethylallyladenosine(37) in tRNA + (sulfur carrier)-H + 5'-deoxyadenosine + L-methionine + A + S-adenosyl-L-homocysteine + 2 H(+). Catalyzes the methylthiolation of N6-(dimethylallyl)adenosine (i(6)A), leading to the formation of 2-methylthio-N6-(dimethylallyl)adenosine (ms(2)i(6)A) at position 37 in tRNAs that read codons beginning with uridine. The chain is tRNA-2-methylthio-N(6)-dimethylallyladenosine synthase from Acinetobacter baylyi (strain ATCC 33305 / BD413 / ADP1).